We begin with the raw amino-acid sequence, 403 residues long: Probable tRNA sulfurtransferase (403 aa).

One can recognise a THUMP domain in the interval 60–165 (QLAEERLKPI…KEGVFLSCRT (106 aa)). ATP is bound by residues 183-184 (ML), 208-209 (HF), Arg-265, Gly-287, and Gln-296.

It belongs to the ThiI family.

The protein resides in the cytoplasm. The catalysed reaction is [ThiI sulfur-carrier protein]-S-sulfanyl-L-cysteine + a uridine in tRNA + 2 reduced [2Fe-2S]-[ferredoxin] + ATP + H(+) = [ThiI sulfur-carrier protein]-L-cysteine + a 4-thiouridine in tRNA + 2 oxidized [2Fe-2S]-[ferredoxin] + AMP + diphosphate. It carries out the reaction [ThiS sulfur-carrier protein]-C-terminal Gly-Gly-AMP + S-sulfanyl-L-cysteinyl-[cysteine desulfurase] + AH2 = [ThiS sulfur-carrier protein]-C-terminal-Gly-aminoethanethioate + L-cysteinyl-[cysteine desulfurase] + A + AMP + 2 H(+). It functions in the pathway cofactor biosynthesis; thiamine diphosphate biosynthesis. In terms of biological role, catalyzes the ATP-dependent transfer of a sulfur to tRNA to produce 4-thiouridine in position 8 of tRNAs, which functions as a near-UV photosensor. Also catalyzes the transfer of sulfur to the sulfur carrier protein ThiS, forming ThiS-thiocarboxylate. This is a step in the synthesis of thiazole, in the thiamine biosynthesis pathway. The sulfur is donated as persulfide by IscS. The sequence is that of Probable tRNA sulfurtransferase from Listeria monocytogenes serotype 4a (strain HCC23).